Consider the following 123-residue polypeptide: Large ribosomal subunit protein uL14 (123 aa).

The protein belongs to the universal ribosomal protein uL14 family. In terms of assembly, part of the 50S ribosomal subunit. Forms a cluster with proteins L3 and L19. In the 70S ribosome, L14 and L19 interact and together make contacts with the 16S rRNA in bridges B5 and B8.

Binds to 23S rRNA. Forms part of two intersubunit bridges in the 70S ribosome. The sequence is that of Large ribosomal subunit protein uL14 from Vibrio parahaemolyticus serotype O3:K6 (strain RIMD 2210633).